The following is a 299-amino-acid chain: Taste receptor type 2 member 5 (299 aa).

Met1 is a topological domain (extracellular). The helical transmembrane segment at 2–22 (LSAGLGLLMLVAVVEFLIGLI) threads the bilayer. The Cytoplasmic segment spans residues 23 to 45 (GNGVLVVWSFREWIRKFSWSSYN). Residues 46–66 (LIILGLAGCRFVLQWLIILDL) form a helical membrane-spanning segment. Residues 67-82 (SLFPLFQSSRWLRYLS) are Extracellular-facing. Residues 83 to 103 (IFWVLVSQASLWFATFLSVFY) form a helical membrane-spanning segment. At 104–127 (CKKITTFDHPAYLWLKQRAYNLSL) the chain is on the cytoplasmic side. The chain crosses the membrane as a helical span at residues 128–148 (WCLLGYFIINLLLTVQIGLMF). Topologically, residues 149–175 (YHPPQGNSSIRYPFESWQYLYAFRLNS) are extracellular. N-linked (GlcNAc...) asparagine glycosylation occurs at Asn155. The chain crosses the membrane as a helical span at residues 176–196 (GSYLPLMVFLVSSGMLIVSLY). Residues 197–223 (THHKKMKVHSAGRRDVRAKAHITALKS) lie on the Cytoplasmic side of the membrane. The chain crosses the membrane as a helical span at residues 224 to 244 (LGCFLLLHLVYIMASPFSIAS). Residues 245–253 (KTYPPDLTS) are Extracellular-facing. The chain crosses the membrane as a helical span at residues 254-274 (VFIWETLMAAYPSLHSLILIM). Topologically, residues 275–299 (GIPRVKQTCQKILWKTVCARRCWGP) are cytoplasmic.

This sequence belongs to the G-protein coupled receptor T2R family.

The protein resides in the membrane. Functionally, receptor that may play a role in the perception of bitterness and is gustducin-linked. May play a role in sensing the chemical composition of the gastrointestinal content. The activity of this receptor may stimulate alpha gustducin, mediate PLC-beta-2 activation and lead to the gating of TRPM5. In Pan paniscus (Pygmy chimpanzee), this protein is Taste receptor type 2 member 5 (TAS2R5).